The sequence spans 307 residues: Ribonuclease Z (307 aa).

Zn(2+) contacts are provided by histidine 63, histidine 65, aspartate 67, histidine 68, histidine 143, aspartate 213, and histidine 271. Aspartate 67 serves as the catalytic Proton acceptor.

This sequence belongs to the RNase Z family. In terms of assembly, homodimer. The cofactor is Zn(2+).

It carries out the reaction Endonucleolytic cleavage of RNA, removing extra 3' nucleotides from tRNA precursor, generating 3' termini of tRNAs. A 3'-hydroxy group is left at the tRNA terminus and a 5'-phosphoryl group is left at the trailer molecule.. Zinc phosphodiesterase, which displays some tRNA 3'-processing endonuclease activity. Probably involved in tRNA maturation, by removing a 3'-trailer from precursor tRNA. This Lactococcus lactis subsp. cremoris (strain SK11) protein is Ribonuclease Z.